The primary structure comprises 200 residues: Ras-related protein RABF2b (200 aa).

Position 17–25 (17–25) interacts with GTP; sequence GDVGAGKSS. The Effector region motif lies at 39–47; sequence QESTIGAAF. GTP-binding positions include 65 to 69, 123 to 126, and 153 to 154; these read DTAGQ, NKSD, and SA. S-geranylgeranyl cysteine attachment occurs at residues C198 and C199.

The protein belongs to the small GTPase superfamily. Rab family. Interacts with VPS9A homodimer. Interacts with TCTP1. Interacts with MON1. Interacts with EREX (via PX domain). Binds to VPS3. As to expression, expressed in roots and actively dividing cells.

It localises to the early endosome membrane. The protein resides in the endosome membrane. It is found in the prevacuolar compartment membrane. Its subcellular location is the endosome. The protein localises to the multivesicular body membrane. It localises to the cell membrane. The protein resides in the cytoplasm. Regulated by guanine nucleotide exchange factors (GEFs) which promote the exchange of bound GDP for free GTP. Functionally, endosomal protein that may be involved in endocytosis. Involved in the trafficking of proteins from prevacuolar compartments (PVCs) to vacuoles. May activate the MON1-CCZ1 complex which acts as guanine nucleotide exchange factors (GEF) for Rab7 protein family, and serves as a link between Rab5 and Rab7 families in PVCs, and mediates PVC maturation. Involved in vacuolar transport of storage proteins with EREX as effector. Regulates membrane trafficking to protein storage vacuoles (PSVs). This chain is Ras-related protein RABF2b, found in Arabidopsis thaliana (Mouse-ear cress).